The following is an 898-amino-acid chain: Translation initiation factor IF-2 (898 aa).

2 disordered regions span residues 51 to 70 and 114 to 303; these read RKSHGAEDEGSGKKITLKRK and LAAE…KQHG. Basic and acidic residues-rich tracts occupy residues 114-171 and 184-258; these read LAAE…EKSK and PAKE…DDKG. The tr-type G domain maps to 398 to 567; the sequence is HRAPVVTIMG…LLQSELLELQ (170 aa). A G1 region spans residues 407–414; sequence GHVDHGKT. Position 407-414 (407-414) interacts with GTP; sequence GHVDHGKT. Residues 432–436 form a G2 region; the sequence is GITQH. Residues 453 to 456 form a G3 region; that stretch reads DTPG. GTP contacts are provided by residues 453–457 and 507–510; these read DTPGH and NKID. Residues 507-510 are G4; that stretch reads NKID. A G5 region spans residues 543–545; the sequence is SAH.

The protein belongs to the TRAFAC class translation factor GTPase superfamily. Classic translation factor GTPase family. IF-2 subfamily.

It localises to the cytoplasm. In terms of biological role, one of the essential components for the initiation of protein synthesis. Protects formylmethionyl-tRNA from spontaneous hydrolysis and promotes its binding to the 30S ribosomal subunits. Also involved in the hydrolysis of GTP during the formation of the 70S ribosomal complex. This chain is Translation initiation factor IF-2, found in Alcanivorax borkumensis (strain ATCC 700651 / DSM 11573 / NCIMB 13689 / SK2).